Here is a 238-residue protein sequence, read N- to C-terminus: Ephrin-A3 (238 aa).

The signal sequence occupies residues 1–22; the sequence is MAAAPLLLLLLLVPVPLLPLLA. In terms of domain architecture, Ephrin RBD spans 30 to 169; sequence GNRHAVYWNS…RMKVFVCCAS (140 aa). Asparagine 38, asparagine 67, and asparagine 100 each carry an N-linked (GlcNAc...) asparagine glycan. Cystine bridges form between cysteine 63/cysteine 110 and cysteine 99/cysteine 158. Glycine 214 is lipidated: GPI-anchor amidated glycine. The propeptide at 215–238 is removed in mature form; the sequence is TSPKREHLPLAVGIAFFLMTFLAS.

Belongs to the ephrin family. Interacts with EPHA8; activates EPHA8. As to expression, expressed in brain, skeletal muscle, spleen, thymus, prostate, testis, ovary, small intestine, and peripheral blood leukocytes.

Its subcellular location is the cell membrane. In terms of biological role, cell surface GPI-bound ligand for Eph receptors, a family of receptor tyrosine kinases which are crucial for migration, repulsion and adhesion during neuronal, vascular and epithelial development. Binds promiscuously Eph receptors residing on adjacent cells, leading to contact-dependent bidirectional signaling into neighboring cells. The signaling pathway downstream of the receptor is referred to as forward signaling while the signaling pathway downstream of the ephrin ligand is referred to as reverse signaling. In Homo sapiens (Human), this protein is Ephrin-A3 (EFNA3).